A 344-amino-acid polypeptide reads, in one-letter code: Bifunctional trans-3-hydroxy-L-proline dehydratase/2-epimerase (344 aa).

Ser90 acts as the Proton acceptor in catalysis. Substrate-binding positions include 91-92 (GS), Asp252, and 257-258 (GT).

Belongs to the proline racemase family.

The catalysed reaction is trans-3-hydroxy-L-proline = 1-pyrroline-2-carboxylate + H2O. It carries out the reaction trans-3-hydroxy-L-proline = cis-3-hydroxy-D-proline. Bifunctional enzyme catalyzing both the dehydration of trans-3-hydroxy-L-proline (t3LHyp) to Delta(1)-pyrroline-2-carboxylate (Pyr2C) and 2-epimerization of t3LHyp to cis-3-hydroxy-D-proline (c3DHyp). No dehydratase activity with L-proline, trans-4-hydroxy-L-proline (t4LHyp), cis-4-hydroxy-L-proline (c4LHyp), D-proline, cis-4-hydroxy-D-proline (c4DHyp), trans-4-hydroxy-D-proline (t4DHyp) or L-serine as substrates. Displays neither t4LHyp epimerase nor proline racemase activity. Is likely involved in a degradation pathway that converts t3LHyp to L-proline, which would allow P.aeruginosa to grow on t3LHyp as a sole carbon source. The chain is Bifunctional trans-3-hydroxy-L-proline dehydratase/2-epimerase from Pseudomonas aeruginosa (strain ATCC 15692 / DSM 22644 / CIP 104116 / JCM 14847 / LMG 12228 / 1C / PRS 101 / PAO1).